Reading from the N-terminus, the 231-residue chain is Large ribosomal subunit protein uL1 (231 aa).

It belongs to the universal ribosomal protein uL1 family. As to quaternary structure, part of the 50S ribosomal subunit.

Its function is as follows. Binds directly to 23S rRNA. The L1 stalk is quite mobile in the ribosome, and is involved in E site tRNA release. In terms of biological role, protein L1 is also a translational repressor protein, it controls the translation of the L11 operon by binding to its mRNA. The sequence is that of Large ribosomal subunit protein uL1 from Janthinobacterium sp. (strain Marseille) (Minibacterium massiliensis).